We begin with the raw amino-acid sequence, 274 residues long: Sulfur carrier protein FdhD (274 aa).

Cys-121 functions as the Cysteine persulfide intermediate in the catalytic mechanism. 258–263 (FSKPGR) is a binding site for Mo-bis(molybdopterin guanine dinucleotide).

This sequence belongs to the FdhD family.

It localises to the cytoplasm. Its function is as follows. Required for formate dehydrogenase (FDH) activity. Acts as a sulfur carrier protein that transfers sulfur from IscS to the molybdenum cofactor prior to its insertion into FDH. In Yersinia pseudotuberculosis serotype O:3 (strain YPIII), this protein is Sulfur carrier protein FdhD.